The following is a 143-amino-acid chain: Large ribosomal subunit protein uL11 (143 aa).

It belongs to the universal ribosomal protein uL11 family. Part of the ribosomal stalk of the 50S ribosomal subunit. Interacts with L10 and the large rRNA to form the base of the stalk. L10 forms an elongated spine to which L12 dimers bind in a sequential fashion forming a multimeric L10(L12)X complex. Post-translationally, one or more lysine residues are methylated.

In terms of biological role, forms part of the ribosomal stalk which helps the ribosome interact with GTP-bound translation factors. This Phenylobacterium zucineum (strain HLK1) protein is Large ribosomal subunit protein uL11.